The following is a 55-amino-acid chain: Large ribosomal subunit protein bL33 (55 aa).

Residues 1–11 show a composition bias toward basic and acidic residues; the sequence is MAKGGREKIKL. The tract at residues 1-27 is disordered; the sequence is MAKGGREKIKLESTAGTGHFYTTSKNK. Residues 14–24 show a composition bias toward polar residues; sequence TAGTGHFYTTS.

Belongs to the bacterial ribosomal protein bL33 family.

The sequence is that of Large ribosomal subunit protein bL33 from Dechloromonas aromatica (strain RCB).